A 557-amino-acid chain; its full sequence is Carbamoyl phosphate synthase large chain, N-terminal section (557 aa).

Residues 1–402 (MPKRTDIKKI…ALLKAVRSLE (402 aa)) form a carboxyphosphate synthetic domain region. Positions 129, 169, 175, 176, 208, 210, 215, 241, 242, 243, 285, and 299 each coordinate ATP. An ATP-grasp domain is found at 133 to 328 (KETMESIGLK…IAKVAAKLAV (196 aa)). Q285, E299, and N301 together coordinate Mg(2+). Mn(2+) is bound by residues Q285, E299, and N301. An oligomerization domain region spans residues 403-553 (LDRYGLAFPK…PYYTVDGQEI (151 aa)).

It belongs to the CarB family. In terms of assembly, composed of two chains; the small (or glutamine) chain promotes the hydrolysis of glutamine to ammonia, which is used by the large (or ammonia) chain to synthesize carbamoyl phosphate. Tetramer of heterodimers (alpha,beta)4. The cofactor is Mg(2+). Requires Mn(2+) as cofactor.

The catalysed reaction is hydrogencarbonate + L-glutamine + 2 ATP + H2O = carbamoyl phosphate + L-glutamate + 2 ADP + phosphate + 2 H(+). The enzyme catalyses hydrogencarbonate + NH4(+) + 2 ATP = carbamoyl phosphate + 2 ADP + phosphate + 2 H(+). Its pathway is amino-acid biosynthesis; L-arginine biosynthesis; carbamoyl phosphate from bicarbonate: step 1/1. It functions in the pathway pyrimidine metabolism; UMP biosynthesis via de novo pathway; (S)-dihydroorotate from bicarbonate: step 1/3. In terms of biological role, large subunit of the glutamine-dependent carbamoyl phosphate synthetase (CPSase). CPSase catalyzes the formation of carbamoyl phosphate from the ammonia moiety of glutamine, carbonate, and phosphate donated by ATP, constituting the first step of 2 biosynthetic pathways, one leading to arginine and/or urea and the other to pyrimidine nucleotides. The large subunit (synthetase) binds the substrates ammonia (free or transferred from glutamine from the small subunit), hydrogencarbonate and ATP and carries out an ATP-coupled ligase reaction, activating hydrogencarbonate by forming carboxy phosphate which reacts with ammonia to form carbamoyl phosphate. The sequence is that of Carbamoyl phosphate synthase large chain, N-terminal section (carB1) from Aquifex aeolicus (strain VF5).